We begin with the raw amino-acid sequence, 464 residues long: Juvenile hormone epoxide hydrolase 1 (464 aa).

Residues 7–27 (MLIFAAIAGIAVLYYQITKEL) traverse the membrane as a helical segment. Asp-224 (nucleophile) is an active-site residue. Tyr-370 functions as the Proton donor in the catalytic mechanism. The active-site Proton acceptor is the His-427.

It belongs to the peptidase S33 family. As to expression, developing oocytes, fat body and midgut epithelium of adults.

It localises to the microsome membrane. The protein localises to the endoplasmic reticulum membrane. It carries out the reaction cis-stilbene oxide + H2O = (1R,2R)-hydrobenzoin. It catalyses the reaction 1-(4-methoxyphenyl)-N-methyl-N-[(3-methyloxetan-3-yl)methyl]methanamine + H2O = 2-{[(4-methoxybenzyl)(methyl)amino]methyl}-2-methylpropane-1,3-diol. Catalyzes juvenile hormone hydrolysis. This chain is Juvenile hormone epoxide hydrolase 1, found in Ctenocephalides felis (Cat flea).